The primary structure comprises 860 residues: MQEQYRPDLIEADVQKYWAEKKTFKAVKDPSKEKYYCLSMFPYPSGRLHMGHVRNYTIGDVISRYQRMNGKNVLQPMGWDAFGLPAEGAAIKNKTAPAKWTYENIEYMKNQLKVLGFGFDWDREITTCKPEYYKWEQWFFTELYKKGLVYKKTSTVNWCPNDETVLANEQVHEGCCWRCDTPVEQKEIPQWFIKITDYAEQLLSDLDQLPEWPDMVKTMQRNWIGRSEGVEITFNVAHSDQTLTVYTTRPDTFYGVSYLAVAAAHPLAESAAKNNPELAAFIHEAKNTKVAEAELATMEKKGMATGLYAVHPMTGKQLPIWVANFVLMHYGTGAVMAVPAHDQRDYEFAQKYQLPLFPVIKPADNSAWDFSKQAYTEHGITINSAEFDGLDFEATFNGIADKLEKIGVGKRQVNYRLRDWGVSRQRYWGAPIPMLTLENGDVVVAPLQDLPIVLPEDVVMDGVKSPIKADPEWAKTTYNGQAALKETDTFDTFMESSWYYARYTSPQYQQAMLDADEANYWLPVDQYIGGIEHATMHLLYFRFFHKLLRDAGFVTSDEPSKKLLCQGMVLADAFYYTSPTNERIWVSPTKVTLERDEKGRIIKAVDDEGHELVHSGMTKMSKSKNNGIDPQEMVEKYGADTVRLFMMFASPAEMTLEWQESGVEGANRFLRRLWNLVFEYNQNPAQTALDPTALSVEQKALRRDVHKTIAKVSDDIGRRQTFNTAIAAIMELMNKLTKASLSNEQDRAVMAEALNAVVRMLYPITPHICFQLWQDLGNESTIDFAPWVIADAEAMVEDEKLVVIQVNGKVRAKVTVPADMSEDEIKQVALAEENVQKFLNGLTVVKTIYVQGKLFSFVAK.

Positions 42–52 match the 'HIGH' region motif; that stretch reads PYPSGRLHMGH. The 'KMSKS' region motif lies at 619–623; the sequence is KMSKS. Residue Lys622 participates in ATP binding.

This sequence belongs to the class-I aminoacyl-tRNA synthetase family.

The protein resides in the cytoplasm. It carries out the reaction tRNA(Leu) + L-leucine + ATP = L-leucyl-tRNA(Leu) + AMP + diphosphate. In Histophilus somni (strain 129Pt) (Haemophilus somnus), this protein is Leucine--tRNA ligase.